The primary structure comprises 111 residues: Beta-microseminoprotein (111 aa).

The signal sequence occupies residues 1–20; it reads MKFLLGTLVVLATFVTLCNS. Pyrrolidone carboxylic acid is present on Gln-21. Intrachain disulfides connect Cys-22–Cys-67, Cys-35–Cys-59, Cys-54–Cys-90, Cys-57–Cys-66, and Cys-81–Cys-104.

Belongs to the beta-microseminoprotein family. Homodimer; Interacts with PI16. As to expression, corpora lutea, mostly in the luteal cells surrounding blood vessels.

The protein resides in the secreted. This is Beta-microseminoprotein (MSMB) from Sus scrofa (Pig).